The following is a 346-amino-acid chain: MLPFRFTYYTILDIFRFALRFIRPDPRSRVTDPVGDIVSFMHSFEEKYGRAHPVFYQGTYSQALSDAKRELRFLLVYLHGDDHQDSDEFCRNALCAPEVISLINSRMLFWACSTNKPEGYRVSQALRENTYPFLAMIMLKDRRMTVVGRLEGLIQPDDLINQLTFIMDANQTYLVSERLEREERNQTQVLRQQQDEAYLASLRADQEKERKKREERERKRRKEEEVQQQKLAEERRRQNLQEEKERKLECLPPEPSPDDPDSVKIIFKLPNDSRVERRFHFSQSLTVIHDFLFSLKESPEKFQIEANFPRRVLPCVPSEEWPNPPTLQEAGLSHTEVLFVQDLTDE.

N6-acetyllysine is present on lysine 68. A coiled-coil region spans residues 176–251; it reads SERLEREERN…EEKERKLECL (76 aa). The disordered stretch occupies residues 200–262; sequence ASLRADQEKE…PEPSPDDPDS (63 aa). Residues 204-249 are compositionally biased toward basic and acidic residues; it reads ADQEKERKKREERERKRRKEEEVQQQKLAEERRRQNLQEEKERKLE. A UBX domain is found at 258 to 340; sequence DDPDSVKIIF…GLSHTEVLFV (83 aa).

As to quaternary structure, identified in a complex that contains SEL1L, OS9, FAF2/UBXD8, UBE2J1/UBC6E and AUP1. Interacts with YOD1. Interacts (via N-terminus) with UBQLN2 (via C-terminus). Interacts with PNPLA2 and UBAC2. Interacts with ZFAND2B; probably through VCP. Interacts with LMBR1L.

It localises to the cytoplasm. Its subcellular location is the lipid droplet. The protein localises to the endoplasmic reticulum. Functionally, plays an important role in endoplasmic reticulum-associated degradation (ERAD) that mediates ubiquitin-dependent degradation of misfolded endoplasmic reticulum proteins. By controlling the steady-state expression of the IGF1R receptor, indirectly regulates the insulin-like growth factor receptor signaling pathway. Involved in inhibition of lipid droplet degradation by binding to phospholipase PNPL2 and inhibiting its activity by promoting dissociation of PNPL2 from its endogenous activator, ABHD5 which inhibits the rate of triacylglycerol hydrolysis. Involved in stress granule disassembly: associates with ubiquitinated G3BP1 in response to heat shock, thereby promoting interaction between ubiquitinated G3BP1 and VCP, followed by G3BP1 extraction from stress granules and stress granule disassembly. This chain is FAS-associated factor 2 (Faf2), found in Rattus norvegicus (Rat).